The following is a 540-amino-acid chain: Peptide chain release factor 3 (540 aa).

The 270-residue stretch at 14 to 283 (NQRRNFAIIS…AFLDYALKPI (270 aa)) folds into the tr-type G domain. GTP contacts are provided by residues 23–30 (SHPDAGKT), 91–95 (DTPGH), and 145–148 (NKLD).

This sequence belongs to the TRAFAC class translation factor GTPase superfamily. Classic translation factor GTPase family. PrfC subfamily.

It is found in the cytoplasm. In terms of biological role, increases the formation of ribosomal termination complexes and stimulates activities of RF-1 and RF-2. It binds guanine nucleotides and has strong preference for UGA stop codons. It may interact directly with the ribosome. The stimulation of RF-1 and RF-2 is significantly reduced by GTP and GDP, but not by GMP. This Gloeothece citriformis (strain PCC 7424) (Cyanothece sp. (strain PCC 7424)) protein is Peptide chain release factor 3.